The sequence spans 396 residues: Elongation factor Tu (396 aa).

The tr-type G domain maps to 10–205 (KPHVNIGTIG…AVDESIPDPV (196 aa)). The tract at residues 19 to 26 (GHVDHGKT) is G1. GTP is bound at residue 19-26 (GHVDHGKT). T26 provides a ligand contact to Mg(2+). The G2 stretch occupies residues 62-66 (GITIN). The segment at 83–86 (DAPG) is G3. Residues 83–87 (DAPGH) and 138–141 (NKAD) contribute to the GTP site. Residues 138–141 (NKAD) form a G4 region. The G5 stretch occupies residues 175 to 177 (SAL).

The protein belongs to the TRAFAC class translation factor GTPase superfamily. Classic translation factor GTPase family. EF-Tu/EF-1A subfamily. Monomer.

The protein resides in the cytoplasm. It catalyses the reaction GTP + H2O = GDP + phosphate + H(+). In terms of biological role, GTP hydrolase that promotes the GTP-dependent binding of aminoacyl-tRNA to the A-site of ribosomes during protein biosynthesis. The sequence is that of Elongation factor Tu from Rhodococcus erythropolis (strain PR4 / NBRC 100887).